Here is a 525-residue protein sequence, read N- to C-terminus: tRNA(Ile)-lysidine synthase (525 aa).

Ser-32 to Ser-37 lines the ATP pocket.

This sequence belongs to the tRNA(Ile)-lysidine synthase family.

The protein localises to the cytoplasm. The catalysed reaction is cytidine(34) in tRNA(Ile2) + L-lysine + ATP = lysidine(34) in tRNA(Ile2) + AMP + diphosphate + H(+). Functionally, ligates lysine onto the cytidine present at position 34 of the AUA codon-specific tRNA(Ile) that contains the anticodon CAU, in an ATP-dependent manner. Cytidine is converted to lysidine, thus changing the amino acid specificity of the tRNA from methionine to isoleucine. In Psychrobacter sp. (strain PRwf-1), this protein is tRNA(Ile)-lysidine synthase.